The following is a 311-amino-acid chain: Urease accessory protein UreD 3 (311 aa).

The protein belongs to the UreD family. UreD, UreF and UreG form a complex that acts as a GTP-hydrolysis-dependent molecular chaperone, activating the urease apoprotein by helping to assemble the nickel containing metallocenter of UreC. The UreE protein probably delivers the nickel.

It localises to the cytoplasm. Functionally, required for maturation of urease via the functional incorporation of the urease nickel metallocenter. The protein is Urease accessory protein UreD 3 of Methylorubrum populi (strain ATCC BAA-705 / NCIMB 13946 / BJ001) (Methylobacterium populi).